A 149-amino-acid chain; its full sequence is Arginine repressor (149 aa).

The protein belongs to the ArgR family.

Its subcellular location is the cytoplasm. The protein operates within amino-acid biosynthesis; L-arginine biosynthesis [regulation]. In terms of biological role, regulates arginine biosynthesis genes. This Bacillus cereus (strain ATCC 10987 / NRS 248) protein is Arginine repressor.